Consider the following 259-residue polypeptide: Ribosomal RNA small subunit methyltransferase J (259 aa).

Residues 101–102 (RD), 117–118 (ER), 153–154 (SS), and Asp176 contribute to the S-adenosyl-L-methionine site.

Belongs to the methyltransferase superfamily. RsmJ family.

The protein localises to the cytoplasm. It carries out the reaction guanosine(1516) in 16S rRNA + S-adenosyl-L-methionine = N(2)-methylguanosine(1516) in 16S rRNA + S-adenosyl-L-homocysteine + H(+). Its function is as follows. Specifically methylates the guanosine in position 1516 of 16S rRNA. This is Ribosomal RNA small subunit methyltransferase J from Aliivibrio fischeri (strain MJ11) (Vibrio fischeri).